The following is a 336-amino-acid chain: 2-phospho-L-lactate transferase (336 aa).

Aspartate 49 contributes to the 7,8-didemethyl-8-hydroxy-5-deazariboflavin binding site.

It belongs to the CofD family. In terms of assembly, homodimer. The cofactor is Mg(2+).

It catalyses the reaction (2S)-lactyl-2-diphospho-5'-guanosine + 7,8-didemethyl-8-hydroxy-5-deazariboflavin = oxidized coenzyme F420-0 + GMP + H(+). The protein operates within cofactor biosynthesis; coenzyme F420 biosynthesis. Its function is as follows. Catalyzes the transfer of the 2-phospholactate moiety from (2S)-lactyl-2-diphospho-5'-guanosine to 7,8-didemethyl-8-hydroxy-5-deazariboflavin (FO) with the formation of oxidized coenzyme F420-0 and GMP. This is 2-phospho-L-lactate transferase from Halobacterium salinarum (strain ATCC 700922 / JCM 11081 / NRC-1) (Halobacterium halobium).